The primary structure comprises 435 residues: Nuclear hormone receptor family member nhr-28 (435 aa).

Residues 5 to 80 (KKPCSVCGEA…VGMRKSAVQR (76 aa)) constitute a DNA-binding region (nuclear receptor). 2 NR C4-type zinc fingers span residues 8–28 (CSVC…CRAC) and 44–63 (CRAM…CRAC). The tract at residues 84-106 (LFGRQDSSDGSNPRVSPSTSWPM) is disordered. Over residues 91-104 (SDGSNPRVSPSTSW) the composition is skewed to polar residues. Residues 113–374 (IEEPGMATLN…ETFYELVSGR (262 aa)) enclose the NR LBD domain.

Belongs to the nuclear hormone receptor family.

It is found in the nucleus. Functionally, orphan nuclear receptor. This Caenorhabditis briggsae protein is Nuclear hormone receptor family member nhr-28.